The following is a 197-amino-acid chain: Imidazoleglycerol-phosphate dehydratase (197 aa).

It belongs to the imidazoleglycerol-phosphate dehydratase family.

It localises to the cytoplasm. The enzyme catalyses D-erythro-1-(imidazol-4-yl)glycerol 3-phosphate = 3-(imidazol-4-yl)-2-oxopropyl phosphate + H2O. The protein operates within amino-acid biosynthesis; L-histidine biosynthesis; L-histidine from 5-phospho-alpha-D-ribose 1-diphosphate: step 6/9. This chain is Imidazoleglycerol-phosphate dehydratase, found in Azotobacter vinelandii (strain DJ / ATCC BAA-1303).